Reading from the N-terminus, the 297-residue chain is Ribonuclease HIII (297 aa).

Positions 81-297 constitute an RNase H type-2 domain; the sequence is IPIIGTDEVG…NTKKAQALLK (217 aa). Positions 87, 88, and 192 each coordinate a divalent metal cation.

The protein belongs to the RNase HII family. RnhC subfamily. Mn(2+) is required as a cofactor. Mg(2+) serves as cofactor.

It localises to the cytoplasm. The catalysed reaction is Endonucleolytic cleavage to 5'-phosphomonoester.. Endonuclease that specifically degrades the RNA of RNA-DNA hybrids. This chain is Ribonuclease HIII, found in Streptococcus agalactiae serotype III (strain NEM316).